A 132-amino-acid chain; its full sequence is Phosphoribosyl-AMP cyclohydrolase (132 aa).

Position 85 (aspartate 85) interacts with Mg(2+). Residue cysteine 86 coordinates Zn(2+). 2 residues coordinate Mg(2+): aspartate 87 and aspartate 89. Zn(2+) contacts are provided by cysteine 102 and cysteine 109.

This sequence belongs to the PRA-CH family. In terms of assembly, homodimer. Requires Mg(2+) as cofactor. The cofactor is Zn(2+).

It localises to the cytoplasm. It catalyses the reaction 1-(5-phospho-beta-D-ribosyl)-5'-AMP + H2O = 1-(5-phospho-beta-D-ribosyl)-5-[(5-phospho-beta-D-ribosylamino)methylideneamino]imidazole-4-carboxamide. It functions in the pathway amino-acid biosynthesis; L-histidine biosynthesis; L-histidine from 5-phospho-alpha-D-ribose 1-diphosphate: step 3/9. Its function is as follows. Catalyzes the hydrolysis of the adenine ring of phosphoribosyl-AMP. In Frankia alni (strain DSM 45986 / CECT 9034 / ACN14a), this protein is Phosphoribosyl-AMP cyclohydrolase.